The sequence spans 1471 residues: MSHARLSVGSECWVSNNNGHWDAARLIEIKDNGGGKVVATVAKSSGVLETVNYQQLQNRNIGQSESPSDLTNLPYLNEPSVLHALHNRYNNKQIYTYSGIVLVSINPYQNLPEFYNDNLIKHFHKDPEAAKVPHLYSIASSCYHALTTDSKNQTIIVSGESGAGKTVAAKYIMRYLTSVQGVDHNGVVKRSVENQVLATNPIMEAFGNAKTIRNDNSSRFGKYVTISFDENLLITGANVNTYLLERSRVVSLLKGERNYHIFYQLITGCTEEQRDKWFLESASSFNYLSQGNCDEISGVDDSNDFTITCRALSTIGISESRQEDVFCLLAALLHLGNIEVCATRNEAQIQPGDGYLQKAALLLGVDSSTLAKWIVKRQLKTRSETIITSSTLEHAISIRDSVAKYLYSALFLWIVHMINASLDHNKVKRAAYKYIGVVDIYGFEHFEKNSMEQFCINYANEKLQQEFNKHVFKLEQEEYVKEGLDWRLIEYSDNQGCISLIEDKLGILSLLDEECRLPSGNHQSFLQKLNNQLPTKHSQFYKKSRFNDGSFMVKHYALDVSYQVHDFLAKNSDAIPDEFISLLQNSKNEFITYLLDFYMQLVSSQNKNPRKTAISRKPTLSSMFKSSLSQLMTTVSSTNVHYIRCIKPNEEKLPWTFSPPMVLSQLRACGVFETIRISSLGFPARFSYEEFAHRFRILLSSKEWEEDNKKLTLNIVNSVIPHDNLNFQVGRSKIFFRSNVIGNFEEAHRATCSKSTVLLQSAIRGFFTRKEYQRTVKFIIKLQSVIMGWLTRQRFEREKIERAAILIQAHWRSYIQRKRYLSLIKCAIVIQSIVRKNIAYSRYINELRESSATLLAKFWRAYNARKTFRGLKKSVIALQCVSRSVLTRRYLRRLQDSAGRTSILYEKQKNLQASITEVSKQLKSNSKKVTVLRNKLNILNNSLSKWKCLIKKPSDFSEPVSMDFTSNDEQLVQLLQAESKLRQASQQLYMAAKKSELGFVQSQTARENLSNYYQALQMTVSEKFEYDTEQLPSRVLFYAMDRYFSIHKKLKQLLELVGVENASLLPNEVVNKQTKDLLYEKRVVFLKQIKQALTVSSLFNAVGYKDGVMRLLETDQNSLLFAGVVNFLIFAGISLDLKTQISEFLSQLCSYFTKIVDGTVIENDKTLDFYEKPLQAVLYWFATLHKIRSFLVHLLSINSHGKQSVVEDLWNPLILKFSKHFSNLENSFHSLVQKLLSCCTEGSINALLNSKCLPEFIDAADENTTPTGMNIYELIDRMNLIHKLLISSALQPNLLELTISHMLQHIGQRAFQTLIHGRSPYTWKSASQVSYNASLLINWCHQKGISYVNSSLLPLMQSPLVFCLRKNDANDLDVILSVCNLLSPFEVVCLLNRYQPCAGENPLPKSFSKAVEALSCKYKQSGFTNGKITNTNGHAIPIAASKNPLLSLENNHIYEELRLSELINLLAKATL.

The region spanning 7 to 61 (SVGSECWVSNNNGHWDAARLIEIKDNGGGKVVATVAKSSGVLETVNYQQLQNRNI) is the Myosin N-terminal SH3-like domain. The region spanning 65-749 (ESPSDLTNLP…VIGNFEEAHR (685 aa)) is the Myosin motor domain. Residue 159-166 (GESGAGKT) participates in ATP binding. The actin-binding stretch occupies residues 628–650 (LSQLMTTVSSTNVHYIRCIKPNE). IQ domains are found at residues 753–773 (SKST…KEYQ), 776–796 (VKFI…QRFE), 801–821 (ERAA…KRYL), 824–844 (IKCA…SRYI), 849–869 (ESSA…KTFR), and 872–892 (KKSV…RYLR). The stretch at 909 to 952 (KNLQASITEVSKQLKSNSKKVTVLRNKLNILNNSLSKWKCLIKK) forms a coiled coil. Positions 1171–1417 (EKPLQAVLYW…SKAVEALSCK (247 aa)) constitute a Dilute domain.

The protein belongs to the TRAFAC class myosin-kinesin ATPase superfamily. Myosin family.

The protein resides in the cytoplasm. Its function is as follows. Involved in cytokinesis. The polypeptide is Myosin-51 (myo51) (Schizosaccharomyces pombe (strain 972 / ATCC 24843) (Fission yeast)).